Consider the following 132-residue polypeptide: Small ribosomal subunit protein uS8 (132 aa).

Belongs to the universal ribosomal protein uS8 family. As to quaternary structure, part of the 30S ribosomal subunit. Contacts proteins S5 and S12.

Functionally, one of the primary rRNA binding proteins, it binds directly to 16S rRNA central domain where it helps coordinate assembly of the platform of the 30S subunit. This Rhodococcus jostii (strain RHA1) protein is Small ribosomal subunit protein uS8.